The sequence spans 616 residues: Vitamin B12 transporter BtuB (616 aa).

An N-terminal signal peptide occupies residues methionine 1–alanine 20. A TonB box motif is present at residues aspartate 26 to asparagine 33. Residues proline 38–threonine 152 enclose the TBDR plug domain. Residues leucine 83, serine 85, asparagine 92, and valine 110–threonine 111 each bind cyanocob(III)alamin. The 462-residue stretch at lysine 155 to phenylalanine 616 folds into the TBDR beta-barrel domain. 3 consecutive transmembrane segments (beta stranded) span residues threonine 158–glycine 165, tyrosine 169–glutamine 178, and threonine 184–threonine 195. Ca(2+)-binding residues include aspartate 199, glutamine 211, aspartate 213, and aspartate 215. A run of 2 beta stranded transmembrane segments spans residues phenylalanine 217–glutamate 227 and aspartate 232–alanine 248. Residues tyrosine 249, aspartate 250, and aspartate 263 each contribute to the Ca(2+) site. Transmembrane regions (beta stranded) follow at residues arginine 265–asparagine 279, aspartate 281–asparagine 298, threonine 311–aspartate 327, histidine 330–tryptophan 339, tyrosine 355–glycine 371, valine 373–aspartate 383, phenylalanine 387–isoleucine 402, tyrosine 405–asparagine 419, glutamate 436–glutamate 445, valine 451–asparagine 460, tyrosine 475–phenylalanine 492, proline 496–alanine 511, arginine 519–threonine 531, aspartate 537–aspartate 552, asparagine 560–serine 574, isoleucine 587–alanine 598, and alanine 604–phenylalanine 616. Threonine 311 provides a ligand contact to cyanocob(III)alamin. A cyanocob(III)alamin-binding site is contributed by arginine 519. The TonB C-terminal box motif lies at tyrosine 599–phenylalanine 616.

This sequence belongs to the TonB-dependent receptor family. BtuB (TC 1.B.14.3.1) subfamily.

It is found in the cell outer membrane. In terms of biological role, involved in the active translocation of vitamin B12 (cyanocobalamin) across the outer membrane to the periplasmic space. It derives its energy for transport by interacting with the trans-periplasmic membrane protein TonB. This Cronobacter sakazakii (strain ATCC BAA-894) (Enterobacter sakazakii) protein is Vitamin B12 transporter BtuB.